Consider the following 394-residue polypeptide: Phosphopentomutase (394 aa).

Asp-13, Asp-286, His-291, Asp-327, His-328, and His-339 together coordinate Mn(2+).

This sequence belongs to the phosphopentomutase family. It depends on Mn(2+) as a cofactor.

The protein localises to the cytoplasm. The catalysed reaction is 2-deoxy-alpha-D-ribose 1-phosphate = 2-deoxy-D-ribose 5-phosphate. It catalyses the reaction alpha-D-ribose 1-phosphate = D-ribose 5-phosphate. The protein operates within carbohydrate degradation; 2-deoxy-D-ribose 1-phosphate degradation; D-glyceraldehyde 3-phosphate and acetaldehyde from 2-deoxy-alpha-D-ribose 1-phosphate: step 1/2. In terms of biological role, isomerase that catalyzes the conversion of deoxy-ribose 1-phosphate (dRib-1-P) and ribose 1-phosphate (Rib-1-P) to deoxy-ribose 5-phosphate (dRib-5-P) and ribose 5-phosphate (Rib-5-P), respectively. This is Phosphopentomutase from Bacillus mycoides (strain KBAB4) (Bacillus weihenstephanensis).